We begin with the raw amino-acid sequence, 161 residues long: Cell division protein SepF 2 (161 aa).

The segment at 19-47 is disordered; the sequence is EDSEKAPELSSSRETKTKNQNQSKSLLRS. Basic and acidic residues predominate over residues 21-35; sequence SEKAPELSSSRETKT.

The protein belongs to the SepF family. As to quaternary structure, homodimer. Interacts with FtsZ.

Its subcellular location is the cytoplasm. In terms of biological role, cell division protein that is part of the divisome complex and is recruited early to the Z-ring. Probably stimulates Z-ring formation, perhaps through the cross-linking of FtsZ protofilaments. Its function overlaps with FtsA. The polypeptide is Cell division protein SepF 2 (Desulforamulus reducens (strain ATCC BAA-1160 / DSM 100696 / MI-1) (Desulfotomaculum reducens)).